Here is a 371-residue protein sequence, read N- to C-terminus: Cytochrome b (371 aa).

The next 4 helical transmembrane spans lie at 25–45 (FGSM…FLAV), 69–90 (WMMQ…YIHI), 105–125 (WMSG…GYVL), and 170–190 (FFAL…LHVI). The heme b site is built by His75 and His89. His174 and His188 together coordinate heme b. His193 serves as a coordination point for a ubiquinone. The next 4 helical transmembrane spans lie at 218–238 (YKDL…VSFF), 280–300 (LGGA…PFTH), 312–332 (LSQL…WAAT), and 339–358 (FIII…ISTP).

The protein belongs to the cytochrome b family. As to quaternary structure, the cytochrome bc1 complex contains 3 respiratory subunits (MT-CYB, CYC1 and UQCRFS1), 2 core proteins (UQCRC1 and UQCRC2) and probably 6 low-molecular weight proteins. Requires heme b as cofactor.

The protein localises to the mitochondrion inner membrane. Its function is as follows. Component of the ubiquinol-cytochrome c reductase complex (complex III or cytochrome b-c1 complex) that is part of the mitochondrial respiratory chain. The b-c1 complex mediates electron transfer from ubiquinol to cytochrome c. Contributes to the generation of a proton gradient across the mitochondrial membrane that is then used for ATP synthesis. The sequence is that of Cytochrome b (MT-CYB) from Python sebae (African rock python).